The sequence spans 307 residues: N-acetylmuramic acid 6-phosphate etherase (307 aa).

Residues 62–225 (IVSSFNRGGR…STASMIRIGK (164 aa)) form the SIS domain. E90 serves as the catalytic Proton donor. The active site involves E121.

Belongs to the GCKR-like family. MurNAc-6-P etherase subfamily. As to quaternary structure, homodimer.

It catalyses the reaction N-acetyl-D-muramate 6-phosphate + H2O = N-acetyl-D-glucosamine 6-phosphate + (R)-lactate. The protein operates within amino-sugar metabolism; 1,6-anhydro-N-acetylmuramate degradation. Its pathway is amino-sugar metabolism; N-acetylmuramate degradation. It participates in cell wall biogenesis; peptidoglycan recycling. Its function is as follows. Specifically catalyzes the cleavage of the D-lactyl ether substituent of MurNAc 6-phosphate, producing GlcNAc 6-phosphate and D-lactate. Together with AnmK, is also required for the utilization of anhydro-N-acetylmuramic acid (anhMurNAc) either imported from the medium or derived from its own cell wall murein, and thus plays a role in cell wall recycling. The polypeptide is N-acetylmuramic acid 6-phosphate etherase (Pseudoalteromonas atlantica (strain T6c / ATCC BAA-1087)).